Consider the following 211-residue polypeptide: ATP phosphoribosyltransferase (211 aa).

Belongs to the ATP phosphoribosyltransferase family. Short subfamily. In terms of assembly, heteromultimer composed of HisG and HisZ subunits.

It localises to the cytoplasm. It catalyses the reaction 1-(5-phospho-beta-D-ribosyl)-ATP + diphosphate = 5-phospho-alpha-D-ribose 1-diphosphate + ATP. It functions in the pathway amino-acid biosynthesis; L-histidine biosynthesis; L-histidine from 5-phospho-alpha-D-ribose 1-diphosphate: step 1/9. Functionally, catalyzes the condensation of ATP and 5-phosphoribose 1-diphosphate to form N'-(5'-phosphoribosyl)-ATP (PR-ATP). Has a crucial role in the pathway because the rate of histidine biosynthesis seems to be controlled primarily by regulation of HisG enzymatic activity. This is ATP phosphoribosyltransferase from Pseudomonas paraeruginosa (strain DSM 24068 / PA7) (Pseudomonas aeruginosa (strain PA7)).